Consider the following 347-residue polypeptide: Merozoite surface protein P12 (347 aa).

Residues 1–25 form the signal peptide; it reads MIKLSKKYCLGISFVLYILLSVCEG. 6-Cys domains lie at 27 to 172 and 175 to 305; these read KNLT…IPSL and KVKG…ISSS. Asparagine 28 carries an N-linked (GlcNAc...) asparagine glycan. Disulfide bonds link cysteine 31-cysteine 53, cysteine 67-cysteine 138, and cysteine 81-cysteine 136. 6 N-linked (GlcNAc...) asparagine glycosylation sites follow: asparagine 147, asparagine 200, asparagine 228, asparagine 242, asparagine 265, and asparagine 322. 3 cysteine pairs are disulfide-bonded: cysteine 179–cysteine 211, cysteine 225–cysteine 286, and cysteine 236–cysteine 284. A lipid anchor (GPI-anchor amidated asparagine) is attached at asparagine 322. The propeptide at 323 to 347 is removed in mature form; sequence SSFLTLSSYCAFITFIITSFLSFIL.

Heterodimer; heterodimerizes with PF41. May form an antiparallel heterodimer with PF41. Post-translationally, processed into a soluble form.

It is found in the cell surface. The protein resides in the cell membrane. This is Merozoite surface protein P12 (PF12) from Plasmodium falciparum (isolate 3D7).